A 205-amino-acid chain; its full sequence is Arginine exporter protein ArgO (205 aa).

Helical transmembrane passes span 1–21 (MLAV…PLGP), 42–62 (LCAL…SALL), 67–87 (LLLA…GWGA), 111–131 (ILVT…DTFV), 147–167 (WFAL…ALLA), and 185–205 (LFVG…GFGL).

The protein belongs to the LysE/ArgO transporter (TC 2.A.75) family.

It is found in the cell inner membrane. It catalyses the reaction L-arginine(in) = L-arginine(out). In terms of biological role, involved in the export of arginine. Important to control the intracellular level of arginine and the correct balance between arginine and lysine. In Yersinia pseudotuberculosis serotype IB (strain PB1/+), this protein is Arginine exporter protein ArgO.